A 306-amino-acid chain; its full sequence is Histone-lysine N-methyltransferase SETMAR (306 aa).

Residues 60 to 123 (PGCACLKTPC…RCRNRVVQWG (64 aa)) form the Pre-SET domain. Zn(2+) contacts are provided by Cys62, Cys64, Cys69, Cys74, Cys76, Cys105, Cys109, Cys111, and Cys115. One can recognise an SET domain in the interval 126-250 (FHLQVFKTDH…PEEELSYDYS (125 aa)). Residues 136 to 138 (KGW), Tyr179, Arg207, and 210 to 211 (NH) each bind S-adenosyl-L-methionine. 4 residues coordinate Zn(2+): Cys213, Cys274, Cys276, and Cys281. Residues 270 to 286 (LRKPCYCGARSCAAFLP) form the Post-SET domain.

This sequence belongs to the class V-like SAM-binding methyltransferase superfamily.

The protein localises to the nucleus. It is found in the chromosome. The catalysed reaction is L-lysyl(36)-[histone H3] + 2 S-adenosyl-L-methionine = N(6),N(6)-dimethyl-L-lysyl(36)-[histone H3] + 2 S-adenosyl-L-homocysteine + 2 H(+). Histone methyltransferase that methylates 'Lys-4' and 'Lys-36' of histone H3, 2 specific tags for epigenetic transcriptional activation. Specifically mediates dimethylation of H3 'Lys-36'. The chain is Histone-lysine N-methyltransferase SETMAR from Bos taurus (Bovine).